We begin with the raw amino-acid sequence, 387 residues long: Protein adenylyltransferase VopS (387 aa).

Residues 76-77, 122-124, 353-355, and arginine 359 each bind ATP; these read IT, LDS, and GNG. The region spanning 278–387 is the Fido domain; that stretch reads LNMDNLKELH…NAENSLHGIK (110 aa).

It localises to the secreted. It catalyses the reaction L-tyrosyl-[protein] + ATP = O-(5'-adenylyl)-L-tyrosyl-[protein] + diphosphate. It carries out the reaction L-threonyl-[protein] + ATP = 3-O-(5'-adenylyl)-L-threonyl-[protein] + diphosphate. In terms of biological role, adenylyltransferase involved in virulence by mediating the addition of adenosine 5'-monophosphate (AMP) to specific threonine residue of host Rho GTPases RhoA, Rac and Cdc42. The resulting AMPylation prevents the interaction of Rho GTPases with downstream effectors, thereby inhibiting actin assembly in infected cells. This Vibrio parahaemolyticus serotype O3:K6 (strain RIMD 2210633) protein is Protein adenylyltransferase VopS (vopS).